Consider the following 221-residue polypeptide: Sugar transporter SWEET1 (221 aa).

The next 7 helical transmembrane spans lie at 3-23, 43-63, 68-88, 102-122, 129-149, 160-180, and 186-206; these read AGGV…LGMF, QFLP…YGVL, TLII…LAYL, ATLL…VPDL, LGLF…ADLA, LSFS…IYGF, and YITV…GLFC. In terms of domain architecture, MtN3/slv 1 spans 10 to 94; it reads FLSSACVLFT…LAYLHYSPQK (85 aa). A MtN3/slv 2 domain is found at 127–212; it reads QQLGLFCSVF…GLFCKYPPEQ (86 aa). Positions 149 to 221 are mediates interaction with TRPV2; it reads AKIVQTKSTQ…QDRKYRLLQT (73 aa).

The protein belongs to the SWEET sugar transporter family. Interacts with TRPV2; the interaction probably occurs intracellularly and depends on TRPV2 N-glycosylation. As to expression, expressed at high levels in lung, placenta, spleen and thymus, at intermediate levels in brain, heart, kidney and testis, and at low levels in bone marrow, liver and lymph node. Within the thymus expression is highest in non-lymphoid cells.

The protein resides in the golgi apparatus membrane. It is found in the cell membrane. Its function is as follows. Mediates sugar transport across membranes. May regulate the expression of RAG1 a gene involved in V(D)J recombination. The chain is Sugar transporter SWEET1 (Slc50a1) from Mus musculus (Mouse).